Consider the following 220-residue polypeptide: Deoxyribose-phosphate aldolase (220 aa).

The active-site Proton donor/acceptor is aspartate 89. The active-site Schiff-base intermediate with acetaldehyde is lysine 151. Residue lysine 180 is the Proton donor/acceptor of the active site.

It belongs to the DeoC/FbaB aldolase family. DeoC type 1 subfamily.

Its subcellular location is the cytoplasm. The catalysed reaction is 2-deoxy-D-ribose 5-phosphate = D-glyceraldehyde 3-phosphate + acetaldehyde. The protein operates within carbohydrate degradation; 2-deoxy-D-ribose 1-phosphate degradation; D-glyceraldehyde 3-phosphate and acetaldehyde from 2-deoxy-alpha-D-ribose 1-phosphate: step 2/2. Its function is as follows. Catalyzes a reversible aldol reaction between acetaldehyde and D-glyceraldehyde 3-phosphate to generate 2-deoxy-D-ribose 5-phosphate. In Staphylococcus epidermidis (strain ATCC 35984 / DSM 28319 / BCRC 17069 / CCUG 31568 / BM 3577 / RP62A), this protein is Deoxyribose-phosphate aldolase.